Here is a 1405-residue protein sequence, read N- to C-terminus: DNA-directed RNA polymerase subunit beta' (1405 aa).

Zn(2+) contacts are provided by Cys71, Cys73, Cys86, and Cys89. Positions 462, 464, and 466 each coordinate Mg(2+). The Zn(2+) site is built by Cys810, Cys884, Cys891, and Cys894.

Belongs to the RNA polymerase beta' chain family. In terms of assembly, the RNAP catalytic core consists of 2 alpha, 1 beta, 1 beta' and 1 omega subunit. When a sigma factor is associated with the core the holoenzyme is formed, which can initiate transcription. Mg(2+) is required as a cofactor. Zn(2+) serves as cofactor.

The catalysed reaction is RNA(n) + a ribonucleoside 5'-triphosphate = RNA(n+1) + diphosphate. In terms of biological role, DNA-dependent RNA polymerase catalyzes the transcription of DNA into RNA using the four ribonucleoside triphosphates as substrates. The polypeptide is DNA-directed RNA polymerase subunit beta' (Maricaulis maris (strain MCS10) (Caulobacter maris)).